Here is a 33-residue protein sequence, read N- to C-terminus: Rugosin-A (33 aa).

Cysteine 27 and cysteine 33 are oxidised to a cystine.

It belongs to the frog skin active peptide (FSAP) family. Brevinin subfamily. As to expression, expressed by the skin glands.

It is found in the secreted. Its function is as follows. Has antibacterial activity against Gram-positive bacteria. In Glandirana rugosa (Japanese wrinkled frog), this protein is Rugosin-A.